Reading from the N-terminus, the 322-residue chain is PIH1 domain-containing protein 2 (322 aa).

This sequence belongs to the PIH1 family.

This is PIH1 domain-containing protein 2 (pih1d2) from Danio rerio (Zebrafish).